We begin with the raw amino-acid sequence, 150 residues long: Transcriptional repressor NrdR (150 aa).

The segment at 3 to 34 (CPFCGYEETKVLDSRPVSNGTSIRRRRECLQC) is a zinc-finger region. An ATP-cone domain is found at 49-139 (IRIIKKDGRR…VYKEFRDLDS (91 aa)).

It belongs to the NrdR family. It depends on Zn(2+) as a cofactor.

Functionally, negatively regulates transcription of bacterial ribonucleotide reductase nrd genes and operons by binding to NrdR-boxes. This chain is Transcriptional repressor NrdR, found in Petrotoga mobilis (strain DSM 10674 / SJ95).